We begin with the raw amino-acid sequence, 122 residues long: Iron-sulfur cluster insertion protein ErpA (122 aa).

Iron-sulfur cluster contacts are provided by C50, C114, and C116.

This sequence belongs to the HesB/IscA family. Homodimer. It depends on iron-sulfur cluster as a cofactor.

Required for insertion of 4Fe-4S clusters for at least IspG. This is Iron-sulfur cluster insertion protein ErpA from Alkalilimnicola ehrlichii (strain ATCC BAA-1101 / DSM 17681 / MLHE-1).